Here is a 299-residue protein sequence, read N- to C-terminus: Probable transport accessory protein MmpS3 (299 aa).

Residues 1-72 (MSGPNPPGRE…EHVTGGPYVP (72 aa)) form a disordered region. Residues 101-121 (VVGVAAIIAAVALVVSVSLLV) traverse the membrane as a helical segment. Residues 128 to 139 (KLATGDTTSSAP) are compositionally biased toward polar residues. The disordered stretch occupies residues 128–213 (KLATGDTTSS…TTTTPTGPRQ (86 aa)). Positions 150 to 163 (PAPPPPPPAPPPTT) are enriched in pro residues. Residues 164 to 176 (EIPTATETQTVTV) are compositionally biased toward low complexity. Pro residues predominate over residues 177-193 (TPPPPPPPATTTAPPPA).

This sequence belongs to the MmpS family.

The protein resides in the cell membrane. In Mycobacterium tuberculosis (strain CDC 1551 / Oshkosh), this protein is Probable transport accessory protein MmpS3 (mmpS3).